We begin with the raw amino-acid sequence, 191 residues long: Surfactant protein C (191 aa).

Residues 1-23 constitute a propeptide that is removed on maturation; it reads MDVGSKEVLMESPPDYSAAPRGR. 2 S-palmitoyl cysteine lipidation sites follow: Cys28 and Cys29. Positions 59–191 are excised as a propeptide; sequence HMSQKHTEMV…LCGEVPLYYI (133 aa). Residues 94-191 enclose the BRICHOS domain; that stretch reads FSFGSTGLVV…LCGEVPLYYI (98 aa). Cysteines 121 and 183 form a disulfide.

It is found in the secreted. The protein localises to the extracellular space. The protein resides in the surface film. Functionally, pulmonary surfactant associated proteins promote alveolar stability by lowering the surface tension at the air-liquid interface in the peripheral air spaces. This chain is Surfactant protein C (SFTPC), found in Macaca mulatta (Rhesus macaque).